A 70-amino-acid chain; its full sequence is MATFSLGKHPHVELCDLLKLEGWSESGAQAKIAIAEGQVKVDGAVETRKRCKIVAGQTVSFAGHSVQVVA.

The 57-residue stretch at 12-68 (VELCDLLKLEGWSESGAQAKIAIAEGQVKVDGAVETRKRCKIVAGQTVSFAGHSVQV) folds into the S4 RNA-binding domain.

In terms of assembly, in pull-down experiments interacts with CedA.

Its function is as follows. Its structure and the presence of conserved basic residues indicates that it probably binds RNA. The chain is Putative RNA-binding protein YbcJ (ybcJ) from Escherichia coli (strain K12).